The primary structure comprises 364 residues: Phosphoserine aminotransferase (364 aa).

R46 lines the L-glutamate pocket. Pyridoxal 5'-phosphate-binding positions include 80–81, W106, T157, D176, and Q199; that span reads AR. K200 carries the post-translational modification N6-(pyridoxal phosphate)lysine. 241–242 serves as a coordination point for pyridoxal 5'-phosphate; that stretch reads NT.

This sequence belongs to the class-V pyridoxal-phosphate-dependent aminotransferase family. SerC subfamily. As to quaternary structure, homodimer. Pyridoxal 5'-phosphate is required as a cofactor.

The protein localises to the cytoplasm. It catalyses the reaction O-phospho-L-serine + 2-oxoglutarate = 3-phosphooxypyruvate + L-glutamate. It carries out the reaction 4-(phosphooxy)-L-threonine + 2-oxoglutarate = (R)-3-hydroxy-2-oxo-4-phosphooxybutanoate + L-glutamate. It functions in the pathway amino-acid biosynthesis; L-serine biosynthesis; L-serine from 3-phospho-D-glycerate: step 2/3. It participates in cofactor biosynthesis; pyridoxine 5'-phosphate biosynthesis; pyridoxine 5'-phosphate from D-erythrose 4-phosphate: step 3/5. In terms of biological role, catalyzes the reversible conversion of 3-phosphohydroxypyruvate to phosphoserine and of 3-hydroxy-2-oxo-4-phosphonooxybutanoate to phosphohydroxythreonine. This is Phosphoserine aminotransferase from Vibrio vulnificus (strain CMCP6).